The following is an 896-amino-acid chain: Alanine--tRNA ligase (896 aa).

Zn(2+)-binding residues include histidine 574, histidine 578, cysteine 677, and histidine 681.

It belongs to the class-II aminoacyl-tRNA synthetase family. It depends on Zn(2+) as a cofactor.

Its subcellular location is the cytoplasm. The enzyme catalyses tRNA(Ala) + L-alanine + ATP = L-alanyl-tRNA(Ala) + AMP + diphosphate. Catalyzes the attachment of alanine to tRNA(Ala) in a two-step reaction: alanine is first activated by ATP to form Ala-AMP and then transferred to the acceptor end of tRNA(Ala). Also edits incorrectly charged Ser-tRNA(Ala) and Gly-tRNA(Ala) via its editing domain. The chain is Alanine--tRNA ligase from Mycoplasma capricolum subsp. capricolum (strain California kid / ATCC 27343 / NCTC 10154).